The following is a 156-amino-acid chain: Small ribosomal subunit protein uS7 (156 aa).

It belongs to the universal ribosomal protein uS7 family. As to quaternary structure, part of the 30S ribosomal subunit. Contacts proteins S9 and S11.

Functionally, one of the primary rRNA binding proteins, it binds directly to 16S rRNA where it nucleates assembly of the head domain of the 30S subunit. Is located at the subunit interface close to the decoding center, probably blocks exit of the E-site tRNA. The chain is Small ribosomal subunit protein uS7 from Rhodospirillum rubrum (strain ATCC 11170 / ATH 1.1.1 / DSM 467 / LMG 4362 / NCIMB 8255 / S1).